A 477-amino-acid polypeptide reads, in one-letter code: Lactate utilization protein B (477 aa).

2 consecutive 4Fe-4S ferredoxin-type domains span residues 304-334 (GTQF…GHSY) and 353-382 (YDTY…LHDL). Residues cysteine 313, cysteine 316, cysteine 319, cysteine 323, cysteine 366, cysteine 369, and cysteine 373 each coordinate [4Fe-4S] cluster. Positions 443 to 463 (GPKPLQAWTNSRDFPMPDDEN) are disordered.

The protein belongs to the LutB/YkgF family.

Its function is as follows. Is involved in L-lactate degradation and allows cells to grow with lactate as the sole carbon source. Has probably a role as an electron transporter during oxidation of L-lactate. The protein is Lactate utilization protein B of Macrococcus caseolyticus (strain JCSC5402) (Macrococcoides caseolyticum).